The sequence spans 386 residues: Methylthioribose-1-phosphate isomerase (386 aa).

Aspartate 258 acts as the Proton donor in catalysis.

It belongs to the eIF-2B alpha/beta/delta subunits family. MtnA subfamily.

The protein resides in the cytoplasm. It localises to the nucleus. It catalyses the reaction 5-(methylsulfanyl)-alpha-D-ribose 1-phosphate = 5-(methylsulfanyl)-D-ribulose 1-phosphate. It functions in the pathway amino-acid biosynthesis; L-methionine biosynthesis via salvage pathway; L-methionine from S-methyl-5-thio-alpha-D-ribose 1-phosphate: step 1/6. Functionally, catalyzes the interconversion of methylthioribose-1-phosphate (MTR-1-P) into methylthioribulose-1-phosphate (MTRu-1-P). The chain is Methylthioribose-1-phosphate isomerase from Uncinocarpus reesii (strain UAMH 1704).